The primary structure comprises 212 residues: Uracil phosphoribosyltransferase (212 aa).

Residues Arg-78, Arg-103, and 130–138 (DPMLATGSS) contribute to the 5-phospho-alpha-D-ribose 1-diphosphate site. Uracil-binding positions include Ile-193 and 198–200 (GDA). A 5-phospho-alpha-D-ribose 1-diphosphate-binding site is contributed by Asp-199.

Belongs to the UPRTase family. Requires Mg(2+) as cofactor.

The enzyme catalyses UMP + diphosphate = 5-phospho-alpha-D-ribose 1-diphosphate + uracil. The protein operates within pyrimidine metabolism; UMP biosynthesis via salvage pathway; UMP from uracil: step 1/1. Allosterically activated by GTP. Catalyzes the conversion of uracil and 5-phospho-alpha-D-ribose 1-diphosphate (PRPP) to UMP and diphosphate. This is Uracil phosphoribosyltransferase from Pseudomonas syringae pv. tomato (strain ATCC BAA-871 / DC3000).